The following is a 447-amino-acid chain: N-succinylarginine dihydrolase (447 aa).

Residues 19 to 28 (AGLSFGNEAS), asparagine 110, and 137 to 138 (HR) contribute to the substrate site. Residue glutamate 174 is part of the active site. Arginine 212 is a substrate binding site. The active site involves histidine 248. Residues aspartate 250 and asparagine 359 each coordinate substrate. The active-site Nucleophile is the cysteine 365.

It belongs to the succinylarginine dihydrolase family. Homodimer.

It catalyses the reaction N(2)-succinyl-L-arginine + 2 H2O + 2 H(+) = N(2)-succinyl-L-ornithine + 2 NH4(+) + CO2. It functions in the pathway amino-acid degradation; L-arginine degradation via AST pathway; L-glutamate and succinate from L-arginine: step 2/5. Catalyzes the hydrolysis of N(2)-succinylarginine into N(2)-succinylornithine, ammonia and CO(2). The polypeptide is N-succinylarginine dihydrolase (Escherichia coli O139:H28 (strain E24377A / ETEC)).